Here is a 288-residue protein sequence, read N- to C-terminus: Polyamine aminopropyltransferase (288 aa).

The region spanning 11–245 is the PABS domain; the sequence is IEWYPRGYGV…SPWSFLVGVK (235 aa). Glutamine 36 is a binding site for S-methyl-5'-thioadenosine. Spermidine is bound by residues histidine 67 and aspartate 91. S-methyl-5'-thioadenosine-binding positions include glutamate 111 and 148–149; that span reads DG. Residue aspartate 166 is the Proton acceptor of the active site. 166–169 provides a ligand contact to spermidine; sequence DSTD. Proline 173 contacts S-methyl-5'-thioadenosine.

This sequence belongs to the spermidine/spermine synthase family. In terms of assembly, homodimer or homotetramer.

It localises to the cytoplasm. The enzyme catalyses S-adenosyl 3-(methylsulfanyl)propylamine + agmatine = N(1)-(3-aminopropyl)agmatine + S-methyl-5'-thioadenosine + H(+). The catalysed reaction is S-adenosyl 3-(methylsulfanyl)propylamine + putrescine = S-methyl-5'-thioadenosine + spermidine + H(+). It carries out the reaction cadaverine + S-adenosyl 3-(methylsulfanyl)propylamine = aminopropylcadaverine + S-methyl-5'-thioadenosine + H(+). It functions in the pathway amine and polyamine biosynthesis; spermidine biosynthesis; spermidine from putrescine: step 1/1. Involved in the biosynthesis of polyamines which are thought to support the growth of thermophilic microorganisms under high-temperature conditions. It seems that long-chain and branched-chain of polyamines effectively stabilize DNA and RNA, respectively. Catalyzes the irreversible transfer of a propylamine group from the amino donor S-adenosylmethioninamine (decarboxy-AdoMet) to agmatine to yield N1-aminopropylagmatine. It can also use cadaverine (1,5-diaminopentane) and putrescine (1,4-diaminobutane) as substrate with a lower activity than that of agmatine. The reaction involves a nucleophilic attack on the C-3 methylene of the propylamine moiety adjacent to the positively charged sulfur of decarboxy-AdoMet. The protein is Polyamine aminopropyltransferase of Thermococcus kodakarensis (strain ATCC BAA-918 / JCM 12380 / KOD1) (Pyrococcus kodakaraensis (strain KOD1)).